The primary structure comprises 216 residues: Fibroblast growth factor 19 (216 aa).

Positions 1-24 (MRSGCVVVHVWILAGLWLAVAGRP) are cleaved as a signal peptide. Cystine bridges form between Cys58-Cys70 and Cys102-Cys120.

This sequence belongs to the heparin-binding growth factors family. Interacts with FGFR1, FGFR2, FGFR3 and FGFR4. Affinity between fibroblast growth factors (FGFs) and their receptors is increased by KL, KLB and heparan sulfate glycosaminoglycans that function as coreceptors. Interacts with KL; this interaction is direct. Interacts with KLB; this interaction is direct. Interacts with FGFR4 in the presence of heparin, KL or KLB. Interacts with MALRD1. Expressed in fetal brain, cartilage, retina, and adult gall bladder.

The protein localises to the secreted. Its function is as follows. Involved in the suppression of bile acid biosynthesis through down-regulation of CYP7A1 expression, following positive regulation of the JNK and ERK1/2 cascades. Stimulates glucose uptake in adipocytes. Activity requires the presence of KLB and FGFR4. In Homo sapiens (Human), this protein is Fibroblast growth factor 19 (FGF19).